The sequence spans 476 residues: Glutamate--tRNA ligase (476 aa).

The 'HIGH' region motif lies at 9–19 (PSPTGTLHIGT). The short motif at 248-252 (KLSKR) is the 'KMSKS' region element. Lys251 contributes to the ATP binding site.

Belongs to the class-I aminoacyl-tRNA synthetase family. Glutamate--tRNA ligase type 1 subfamily. In terms of assembly, monomer.

It localises to the cytoplasm. It catalyses the reaction tRNA(Glu) + L-glutamate + ATP = L-glutamyl-tRNA(Glu) + AMP + diphosphate. Catalyzes the attachment of glutamate to tRNA(Glu) in a two-step reaction: glutamate is first activated by ATP to form Glu-AMP and then transferred to the acceptor end of tRNA(Glu). The chain is Glutamate--tRNA ligase from Prochlorococcus marinus (strain MIT 9303).